The following is a 185-amino-acid chain: Elongation factor P (185 aa).

This sequence belongs to the elongation factor P family.

Its subcellular location is the cytoplasm. It participates in protein biosynthesis; polypeptide chain elongation. Its function is as follows. Involved in peptide bond synthesis. Stimulates efficient translation and peptide-bond synthesis on native or reconstituted 70S ribosomes in vitro. Probably functions indirectly by altering the affinity of the ribosome for aminoacyl-tRNA, thus increasing their reactivity as acceptors for peptidyl transferase. The sequence is that of Elongation factor P from Bordetella petrii (strain ATCC BAA-461 / DSM 12804 / CCUG 43448).